The primary structure comprises 451 residues: Chromosomal replication initiator protein DnaA (451 aa).

The tract at residues 1–73 (MNAHPKEIWE…IRSLQMVTSQ (73 aa)) is domain I, interacts with DnaA modulators. Residues 73–112 (QKYNVKFLISSELPEEFLTLDTINEQNIKGSIIVSDEMSA) are domain II. The interval 113–329 (MLNPKYTFTS…GALIRIVAFS (217 aa)) is domain III, AAA+ region. Positions 157, 159, 160, and 161 each coordinate ATP. The interval 330 to 451 (SLTNKEISVD…NDLTKRLDQQ (122 aa)) is domain IV, binds dsDNA.

Belongs to the DnaA family. As to quaternary structure, oligomerizes as a right-handed, spiral filament on DNA at oriC.

The protein resides in the cytoplasm. Plays an essential role in the initiation and regulation of chromosomal replication. ATP-DnaA binds to the origin of replication (oriC) to initiate formation of the DNA replication initiation complex once per cell cycle. Binds the DnaA box (a 9 base pair repeat at the origin) and separates the double-stranded (ds)DNA. Forms a right-handed helical filament on oriC DNA; dsDNA binds to the exterior of the filament while single-stranded (ss)DNA is stabiized in the filament's interior. The ATP-DnaA-oriC complex binds and stabilizes one strand of the AT-rich DNA unwinding element (DUE), permitting loading of DNA polymerase. After initiation quickly degrades to an ADP-DnaA complex that is not apt for DNA replication. Binds acidic phospholipids. This chain is Chromosomal replication initiator protein DnaA, found in Clostridium kluyveri (strain NBRC 12016).